The primary structure comprises 1000 residues: uncharacterized protein (1000 aa).

Basic and acidic residues predominate over residues 787–809 (RQYEKLKRQRAKSETERHQERHG). The interval 787–812 (RQYEKLKRQRAKSETERHQERHGKLS) is disordered.

This is an uncharacterized protein from Picosynechococcus sp. (strain ATCC 27264 / PCC 7002 / PR-6) (Agmenellum quadruplicatum).